Consider the following 331-residue polypeptide: Biotin synthase (331 aa).

The Radical SAM core domain maps to 48-278 (FDSQKFEFCS…SAELRLCGGR (231 aa)). [4Fe-4S] cluster-binding residues include Cys66, Cys70, and Cys73. Residues Cys110, Cys143, Cys203, and Arg273 each contribute to the [2Fe-2S] cluster site.

The protein belongs to the radical SAM superfamily. Biotin synthase family. Homodimer. Requires [4Fe-4S] cluster as cofactor. [2Fe-2S] cluster is required as a cofactor.

It catalyses the reaction (4R,5S)-dethiobiotin + (sulfur carrier)-SH + 2 reduced [2Fe-2S]-[ferredoxin] + 2 S-adenosyl-L-methionine = (sulfur carrier)-H + biotin + 2 5'-deoxyadenosine + 2 L-methionine + 2 oxidized [2Fe-2S]-[ferredoxin]. It functions in the pathway cofactor biosynthesis; biotin biosynthesis; biotin from 7,8-diaminononanoate: step 2/2. Functionally, catalyzes the conversion of dethiobiotin (DTB) to biotin by the insertion of a sulfur atom into dethiobiotin via a radical-based mechanism. This is Biotin synthase from Hydrogenobaculum sp. (strain Y04AAS1).